Reading from the N-terminus, the 404-residue chain is Cysteine desulfurase IscS (404 aa).

Pyridoxal 5'-phosphate is bound by residues 75–76, asparagine 155, glutamine 183, and 203–205; these read AT and SGH. Lysine 206 is subject to N6-(pyridoxal phosphate)lysine. Threonine 243 contacts pyridoxal 5'-phosphate. Residue cysteine 328 is the Cysteine persulfide intermediate of the active site. Cysteine 328 is a [2Fe-2S] cluster binding site.

The protein belongs to the class-V pyridoxal-phosphate-dependent aminotransferase family. NifS/IscS subfamily. Homodimer. Forms a heterotetramer with IscU, interacts with other sulfur acceptors. Pyridoxal 5'-phosphate serves as cofactor.

Its subcellular location is the cytoplasm. It carries out the reaction (sulfur carrier)-H + L-cysteine = (sulfur carrier)-SH + L-alanine. Its pathway is cofactor biosynthesis; iron-sulfur cluster biosynthesis. In terms of biological role, master enzyme that delivers sulfur to a number of partners involved in Fe-S cluster assembly, tRNA modification or cofactor biosynthesis. Catalyzes the removal of elemental sulfur atoms from cysteine to produce alanine. Functions as a sulfur delivery protein for Fe-S cluster synthesis onto IscU, an Fe-S scaffold assembly protein, as well as other S acceptor proteins. In Shewanella baltica (strain OS155 / ATCC BAA-1091), this protein is Cysteine desulfurase IscS.